The sequence spans 255 residues: 1-(5-phosphoribosyl)-5-[(5-phosphoribosylamino)methylideneamino] imidazole-4-carboxamide isomerase (255 aa).

The active-site Proton acceptor is the Asp-8. Asp-129 serves as the catalytic Proton donor.

The protein belongs to the HisA/HisF family.

The protein resides in the cytoplasm. It carries out the reaction 1-(5-phospho-beta-D-ribosyl)-5-[(5-phospho-beta-D-ribosylamino)methylideneamino]imidazole-4-carboxamide = 5-[(5-phospho-1-deoxy-D-ribulos-1-ylimino)methylamino]-1-(5-phospho-beta-D-ribosyl)imidazole-4-carboxamide. Its pathway is amino-acid biosynthesis; L-histidine biosynthesis; L-histidine from 5-phospho-alpha-D-ribose 1-diphosphate: step 4/9. The protein is 1-(5-phosphoribosyl)-5-[(5-phosphoribosylamino)methylideneamino] imidazole-4-carboxamide isomerase of Synechococcus sp. (strain CC9902).